The chain runs to 518 residues: Protein nucleotidyltransferase YdiU (518 aa).

ATP is bound by residues glycine 99, glycine 101, arginine 102, lysine 122, aspartate 134, glycine 135, arginine 192, and arginine 199. Residue aspartate 270 is the Proton acceptor of the active site. Asparagine 271 and aspartate 280 together coordinate Mg(2+). Aspartate 280 contributes to the ATP binding site.

The protein belongs to the SELO family. It depends on Mg(2+) as a cofactor. Requires Mn(2+) as cofactor.

It carries out the reaction L-seryl-[protein] + ATP = 3-O-(5'-adenylyl)-L-seryl-[protein] + diphosphate. It catalyses the reaction L-threonyl-[protein] + ATP = 3-O-(5'-adenylyl)-L-threonyl-[protein] + diphosphate. The catalysed reaction is L-tyrosyl-[protein] + ATP = O-(5'-adenylyl)-L-tyrosyl-[protein] + diphosphate. The enzyme catalyses L-histidyl-[protein] + UTP = N(tele)-(5'-uridylyl)-L-histidyl-[protein] + diphosphate. It carries out the reaction L-seryl-[protein] + UTP = O-(5'-uridylyl)-L-seryl-[protein] + diphosphate. It catalyses the reaction L-tyrosyl-[protein] + UTP = O-(5'-uridylyl)-L-tyrosyl-[protein] + diphosphate. In terms of biological role, nucleotidyltransferase involved in the post-translational modification of proteins. It can catalyze the addition of adenosine monophosphate (AMP) or uridine monophosphate (UMP) to a protein, resulting in modifications known as AMPylation and UMPylation. The protein is Protein nucleotidyltransferase YdiU of Methylobacillus flagellatus (strain ATCC 51484 / DSM 6875 / VKM B-1610 / KT).